The primary structure comprises 742 residues: uncharacterized protein (742 aa).

The segment at 1–102 (MMLLKRSNDN…FTQTKPNNTD (102 aa)) is disordered. The segment covering 18–28 (NRQNRQNNRQN) has biased composition (low complexity). Residues 48–57 (RDSSRMDPVD) are compositionally biased toward basic and acidic residues. 2 stretches are compositionally biased toward polar residues: residues 60-69 (TLISFTSGKP) and 77-99 (HDTG…TKPN).

This is an uncharacterized protein from Acanthamoeba polyphaga mimivirus (APMV).